The chain runs to 492 residues: Alpha-2-antiplasmin (492 aa).

An N-terminal signal peptide occupies residues 1–22 (MALLWGLLALILSCLSSLCSAQ). The propeptide occupies 23–40 (FSPVSTMEPLDLQLMDGQ). Positions 56–76 (QEPGGQIAPKKAPEDCKLSPT) are disordered. Residues Cys71 and Cys144 are joined by a disulfide bond. Asn127, Asn249, Asn296, Asn310, and Asn317 each carry an N-linked (GlcNAc...) asparagine glycan. Residues 433 to 492 (SVRNPNPGAQPERKEQQDSPDGKDSFQDHKGLPRGDKPFDPDLKLGPPSEEDYAQPSSPK) form a disordered region. Residues 443–475 (PERKEQQDSPDGKDSFQDHKGLPRGDKPFDPDL) are compositionally biased toward basic and acidic residues. Residue Tyr485 is modified to Sulfotyrosine.

Belongs to the serpin family. Forms protease inhibiting heterodimer with TMPRSS7. Post-translationally, proteolytically cleaved at Pro-31 by both the prolyl endopeptidase FAP form and antiplasmin-cleaving enzyme FAP soluble form to generate mature alpha-2-antiplasmin. In terms of tissue distribution, expressed by the liver and secreted in plasma.

The protein resides in the secreted. Serine protease inhibitor. The major targets of this inhibitor are plasmin and trypsin, but it also inactivates matriptase-3/TMPRSS7 and chymotrypsin. In Bos taurus (Bovine), this protein is Alpha-2-antiplasmin (SERPINF2).